A 188-amino-acid polypeptide reads, in one-letter code: Elongation factor P-like protein (188 aa).

The protein belongs to the elongation factor P family.

In Vibrio vulnificus (strain CMCP6), this protein is Elongation factor P-like protein.